A 130-amino-acid chain; its full sequence is Flagellar assembly factor FliW (130 aa).

This sequence belongs to the FliW family. In terms of assembly, interacts with translational regulator CsrA and flagellin(s).

The protein localises to the cytoplasm. Functionally, acts as an anti-CsrA protein, binds CsrA and prevents it from repressing translation of its target genes, one of which is flagellin. Binds to flagellin and participates in the assembly of the flagellum. In Borrelia turicatae (strain 91E135), this protein is Flagellar assembly factor FliW.